Here is a 339-residue protein sequence, read N- to C-terminus: Terpene synthase 9 (339 aa).

A DDxx(x)D/E motif motif is present at residues 79 to 84; that stretch reads DDFLES. The short motif at 219 to 227 is the NDxxSxxxD/E motif element; sequence NDCASYAKE.

The protein belongs to the terpene synthase family.

The catalysed reaction is (2E,6E)-farnesyl diphosphate = (-)-beta-barbatene + diphosphate. The enzyme catalyses (2E,6E)-farnesyl diphosphate = (E)-beta-farnesene + diphosphate. It carries out the reaction (2E)-geranyl diphosphate = (Z)-beta-ocimene + diphosphate. It catalyses the reaction (2E)-geranyl diphosphate + H2O = linalool + diphosphate. The catalysed reaction is (2E)-geranyl diphosphate = beta-myrcene + diphosphate. Terpene synthase that converts its substrate farnesyl diphosphate (FPP) into the sesquiterpene beta-barbatene as a major product as well as (E)-beta-farnesene as a minor product. Is also able to convert geranyl diphosphate (GPP) into a mixture of monoterpenes including (Z)-beta-ocimene, linalool, beta-myrcene, limonene and alpha-terpineol. The polypeptide is Terpene synthase 9 (Dictyostelium discoideum (Social amoeba)).